Here is a 312-residue protein sequence, read N- to C-terminus: MRNHTEITEFILLGLTDDPNFQVVIFVFLLITYMLSITGNLTLITITLLDSHLQTPMYFFLRNFSILEISFTTVSIPKFLGNIISGDKTISFNNCIVQLFFFILLGVTEFYLLAAMSYDRYVAICKPLHCLSIMNRRVCTLLVFTSWLVSFLIIFPALMLLLKLHYCRSNIIDHFTCDYFPLLQLACSDTKFLEVMGFSCAAFTLMFTLALIFLSYIYIIRTILRIPSTSQRTKAFSTCSSHMVVVSISYGSCIFMYIKPSAKDRVSLSKGVAILNTSVAPMMNPFIYSLRNQQVKQAFINMARKTVFFTST.

Residues 1-23 (MRNHTEITEFILLGLTDDPNFQV) lie on the Extracellular side of the membrane. Asparagine 3 carries an N-linked (GlcNAc...) asparagine glycan. The chain crosses the membrane as a helical span at residues 24 to 44 (VIFVFLLITYMLSITGNLTLI). Residues 45 to 52 (TITLLDSH) lie on the Cytoplasmic side of the membrane. Residues 53-73 (LQTPMYFFLRNFSILEISFTT) traverse the membrane as a helical segment. Residues 74–97 (VSIPKFLGNIISGDKTISFNNCIV) lie on the Extracellular side of the membrane. Residues cysteine 95 and cysteine 187 are joined by a disulfide bond. A helical transmembrane segment spans residues 98–118 (QLFFFILLGVTEFYLLAAMSY). The Cytoplasmic segment spans residues 119–137 (DRYVAICKPLHCLSIMNRR). Residues 138 to 158 (VCTLLVFTSWLVSFLIIFPAL) traverse the membrane as a helical segment. At 159–195 (MLLLKLHYCRSNIIDHFTCDYFPLLQLACSDTKFLEV) the chain is on the extracellular side. The chain crosses the membrane as a helical span at residues 196–215 (MGFSCAAFTLMFTLALIFLS). The Cytoplasmic segment spans residues 216–235 (YIYIIRTILRIPSTSQRTKA). The helical transmembrane segment at 236–256 (FSTCSSHMVVVSISYGSCIFM) threads the bilayer. Residues 257 to 269 (YIKPSAKDRVSLS) lie on the Extracellular side of the membrane. The chain crosses the membrane as a helical span at residues 270–290 (KGVAILNTSVAPMMNPFIYSL). The Cytoplasmic portion of the chain corresponds to 291–312 (RNQQVKQAFINMARKTVFFTST).

The protein belongs to the G-protein coupled receptor 1 family.

It is found in the cell membrane. Its function is as follows. Odorant receptor. The chain is Olfactory receptor 6C1 (OR6C1) from Homo sapiens (Human).